A 433-amino-acid polypeptide reads, in one-letter code: Enolase (433 aa).

Gln163 is a binding site for (2R)-2-phosphoglycerate. The active-site Proton donor is the Glu205. Residues Asp242, Glu291, and Asp318 each coordinate Mg(2+). (2R)-2-phosphoglycerate-binding residues include Lys343, Arg372, Ser373, and Lys394. Residue Lys343 is the Proton acceptor of the active site.

The protein belongs to the enolase family. Mg(2+) serves as cofactor.

The protein localises to the cytoplasm. Its subcellular location is the secreted. It is found in the cell surface. The enzyme catalyses (2R)-2-phosphoglycerate = phosphoenolpyruvate + H2O. The protein operates within carbohydrate degradation; glycolysis; pyruvate from D-glyceraldehyde 3-phosphate: step 4/5. Its function is as follows. Catalyzes the reversible conversion of 2-phosphoglycerate (2-PG) into phosphoenolpyruvate (PEP). It is essential for the degradation of carbohydrates via glycolysis. The chain is Enolase from Methylibium petroleiphilum (strain ATCC BAA-1232 / LMG 22953 / PM1).